The following is a 634-amino-acid chain: 1-phosphatidylinositol 4,5-bisphosphate phosphodiesterase zeta-1 (634 aa).

An EF-hand domain is found at Cys-35–Arg-70. Residues Gln-155–Lys-299 form the PI-PLC X-box domain. Residues His-170 and His-215 contribute to the active site. The tract at residues Gly-312–Asp-345 is disordered. Positions Glu-321–Gly-334 are enriched in acidic residues. One can recognise a PI-PLC Y-box domain in the interval Leu-376–Arg-492. Positions Arg-492 to Ser-615 constitute a C2 domain.

As to quaternary structure, interacts (via its C2 domain) with PtdIns(3)P and, to a lesser extent, PtdIns(5)P in vitro. The cofactor is Ca(2+).

The protein resides in the nucleus. It is found in the cytoplasm. The protein localises to the perinuclear region. The catalysed reaction is a 1,2-diacyl-sn-glycero-3-phospho-(1D-myo-inositol-4,5-bisphosphate) + H2O = 1D-myo-inositol 1,4,5-trisphosphate + a 1,2-diacyl-sn-glycerol + H(+). The production of the second messenger molecules diacylglycerol (DAG) and inositol 1,4,5-trisphosphate (IP3) is mediated by activated phosphatidylinositol-specific phospholipase C enzymes. In vitro, hydrolyzes PtdIns(4,5)P2 in a Ca(2+)-dependent manner. Triggers intracellular Ca(2+) oscillations in oocytes solely during M phase and is involved in inducing oocyte activation and initiating embryonic development up to the blastocyst stage. Is therefore a strong candidate for the egg-activating soluble sperm factor that is transferred from the sperm into the egg cytoplasm following gamete membrane fusion. May exert an inhibitory effect on phospholipase-C-coupled processes that depend on calcium ions and protein kinase C, including CFTR trafficking and function. The chain is 1-phosphatidylinositol 4,5-bisphosphate phosphodiesterase zeta-1 from Bos taurus (Bovine).